The sequence spans 107 residues: UPF0060 membrane protein Atu1058 (107 aa).

A run of 4 helical transmembrane segments spans residues 5-25, 32-52, 59-79, and 85-105; these read LIYV…WAWL, WILL…TLVA, AYAA…WGVE, and RWDI…LFGP.

The protein belongs to the UPF0060 family.

It is found in the cell inner membrane. This is UPF0060 membrane protein Atu1058 from Agrobacterium fabrum (strain C58 / ATCC 33970) (Agrobacterium tumefaciens (strain C58)).